The chain runs to 88 residues: Probable Fe(2+)-trafficking protein (88 aa).

The protein belongs to the Fe(2+)-trafficking protein family.

Functionally, could be a mediator in iron transactions between iron acquisition and iron-requiring processes, such as synthesis and/or repair of Fe-S clusters in biosynthetic enzymes. In Teredinibacter turnerae (strain ATCC 39867 / T7901), this protein is Probable Fe(2+)-trafficking protein.